The chain runs to 228 residues: U1 small nuclear ribonucleoprotein C (228 aa).

The segment at 11–43 adopts a Matrin-type; degenerate zinc-finger fold; that stretch reads ATVDYCDIFLTHDSASVRKAHNTGWKHKMQVEH. Positions 83-127 are disordered; the sequence is GQRGQPVGGPPRPPQPFHNGGRPGPPGRPPMGMFPPQRPMMPPPH. The span at 105-127 shows a compositional bias: pro residues; sequence PGPPGRPPMGMFPPQRPMMPPPH.

Belongs to the U1 small nuclear ribonucleoprotein C family. As to quaternary structure, U1 snRNP is composed of the 7 core Sm proteins B/B', D1, D2, D3, E, F and G that assemble in a heptameric protein ring on the Sm site of the small nuclear RNA to form the core snRNP, and at least 3 U1 snRNP-specific proteins U1-70K, U1-A and U1-C. U1-C interacts with U1 snRNA and the 5' splice-site region of the pre-mRNA.

It is found in the nucleus. Its function is as follows. Component of the spliceosomal U1 snRNP, which is essential for recognition of the pre-mRNA 5' splice-site and the subsequent assembly of the spliceosome. U1-C is directly involved in initial 5' splice-site recognition for both constitutive and regulated alternative splicing. The interaction with the 5' splice-site seems to precede base-pairing between the pre-mRNA and the U1 snRNA. Stimulates commitment or early (E) complex formation by stabilizing the base pairing of the 5' end of the U1 snRNA and the 5' splice-site region. The protein is U1 small nuclear ribonucleoprotein C of Batrachochytrium dendrobatidis (strain JAM81 / FGSC 10211) (Frog chytrid fungus).